The sequence spans 44 residues: Relaxin (44 aa).

Gln-1 carries the post-translational modification Pyrrolidone carboxylic acid. Cystine bridges form between Cys-3–Cys-31, Cys-15–Cys-44, and Cys-30–Cys-35.

The protein belongs to the insulin family. Heterodimer of a B chain and an A chain linked by two disulfide bonds.

Its subcellular location is the secreted. This chain is Relaxin, found in Carcharias taurus (Sand tiger shark).